The chain runs to 487 residues: Cytochrome P450 2C4 (487 aa).

Cys432 lines the heme pocket.

The protein belongs to the cytochrome P450 family. Heme is required as a cofactor.

It localises to the endoplasmic reticulum membrane. It is found in the microsome membrane. The catalysed reaction is an organic molecule + reduced [NADPH--hemoprotein reductase] + O2 = an alcohol + oxidized [NADPH--hemoprotein reductase] + H2O + H(+). Cytochromes P450 are a group of heme-thiolate monooxygenases. In liver microsomes, this enzyme is involved in an NADPH-dependent electron transport pathway. It oxidizes a variety of structurally unrelated compounds, including steroids, fatty acids, and xenobiotics. The protein is Cytochrome P450 2C4 (CYP2C4) of Oryctolagus cuniculus (Rabbit).